The following is a 120-amino-acid chain: MSLKIRLTRGGAKKRPYYRIVIADARAPRDGRFIDKVGAYDPMKAKDDPARIVLDNEKIQSWLAKGAQPTDRVLRFLDAAGLAKRPTRNNPQKAEPGEKAKERAAKRAEKAAAPAEDAAA.

The segment at 81 to 120 is disordered; the sequence is GLAKRPTRNNPQKAEPGEKAKERAAKRAEKAAAPAEDAAA. The segment covering 95–110 has biased composition (basic and acidic residues); sequence EPGEKAKERAAKRAEK. Positions 111 to 120 are enriched in low complexity; sequence AAAPAEDAAA.

The protein belongs to the bacterial ribosomal protein bS16 family.

The protein is Small ribosomal subunit protein bS16 of Methylorubrum extorquens (strain CM4 / NCIMB 13688) (Methylobacterium extorquens).